We begin with the raw amino-acid sequence, 400 residues long: Peptidase M20 domain-containing protein C757.05c (400 aa).

Positions 1-25 (MTMKISVWSLLIVIGYHLWMSPVLA) are cleaved as a signal peptide. N-linked (GlcNAc...) asparagine glycosylation occurs at Asn80. Asp152 provides a ligand contact to Zn(2+). Catalysis depends on Glu186, which acts as the Proton acceptor. Glu187 contributes to the Zn(2+) binding site.

Belongs to the peptidase M20A family. Zn(2+) serves as cofactor.

The protein localises to the secreted. The chain is Peptidase M20 domain-containing protein C757.05c from Schizosaccharomyces pombe (strain 972 / ATCC 24843) (Fission yeast).